A 259-amino-acid polypeptide reads, in one-letter code: DNA repair protein RecO (259 aa).

This sequence belongs to the RecO family.

In terms of biological role, involved in DNA repair and RecF pathway recombination. This Leuconostoc mesenteroides subsp. mesenteroides (strain ATCC 8293 / DSM 20343 / BCRC 11652 / CCM 1803 / JCM 6124 / NCDO 523 / NBRC 100496 / NCIMB 8023 / NCTC 12954 / NRRL B-1118 / 37Y) protein is DNA repair protein RecO.